Here is a 322-residue protein sequence, read N- to C-terminus: Protein-L-isoaspartate O-methyltransferase (322 aa).

The interval 1–101 (MSGERAKRFP…AKQGDRSAAP (101 aa)) is disordered. Positions 14–29 (EDLKREPRKPEGRVAE) are enriched in basic and acidic residues. Composition is skewed to low complexity over residues 33 to 51 (AGDA…PAAA) and 76 to 91 (HAPA…PQGG). Residue Ser170 is part of the active site.

This sequence belongs to the methyltransferase superfamily. L-isoaspartyl/D-aspartyl protein methyltransferase family.

It localises to the cytoplasm. It carries out the reaction [protein]-L-isoaspartate + S-adenosyl-L-methionine = [protein]-L-isoaspartate alpha-methyl ester + S-adenosyl-L-homocysteine. Its function is as follows. Catalyzes the methyl esterification of L-isoaspartyl residues in peptides and proteins that result from spontaneous decomposition of normal L-aspartyl and L-asparaginyl residues. It plays a role in the repair and/or degradation of damaged proteins. This Burkholderia pseudomallei (strain 1710b) protein is Protein-L-isoaspartate O-methyltransferase.